A 346-amino-acid chain; its full sequence is N-acetyl-gamma-glutamyl-phosphate reductase (346 aa).

The active site involves Cys-149.

This sequence belongs to the NAGSA dehydrogenase family. Type 1 subfamily.

It localises to the cytoplasm. It catalyses the reaction N-acetyl-L-glutamate 5-semialdehyde + phosphate + NADP(+) = N-acetyl-L-glutamyl 5-phosphate + NADPH + H(+). The protein operates within amino-acid biosynthesis; L-arginine biosynthesis; N(2)-acetyl-L-ornithine from L-glutamate: step 3/4. Functionally, catalyzes the NADPH-dependent reduction of N-acetyl-5-glutamyl phosphate to yield N-acetyl-L-glutamate 5-semialdehyde. This is N-acetyl-gamma-glutamyl-phosphate reductase from Citrifermentans bemidjiense (strain ATCC BAA-1014 / DSM 16622 / JCM 12645 / Bem) (Geobacter bemidjiensis).